Here is a 452-residue protein sequence, read N- to C-terminus: tRNA-2-methylthio-N(6)-dimethylallyladenosine synthase (452 aa).

One can recognise an MTTase N-terminal domain in the interval 16–134 (KRFFISTWGC…LPEYIERVKT (119 aa)). Positions 25, 61, 95, 171, 175, and 178 each coordinate [4Fe-4S] cluster. The Radical SAM core domain maps to 157–387 (RKSDIKAFVT…VEAVNEIMAR (231 aa)). Residues 390-452 (KEFEGKTVEV…NSFSLTGEII (63 aa)) enclose the TRAM domain.

It belongs to the methylthiotransferase family. MiaB subfamily. Monomer. [4Fe-4S] cluster serves as cofactor.

It localises to the cytoplasm. It carries out the reaction N(6)-dimethylallyladenosine(37) in tRNA + (sulfur carrier)-SH + AH2 + 2 S-adenosyl-L-methionine = 2-methylsulfanyl-N(6)-dimethylallyladenosine(37) in tRNA + (sulfur carrier)-H + 5'-deoxyadenosine + L-methionine + A + S-adenosyl-L-homocysteine + 2 H(+). In terms of biological role, catalyzes the methylthiolation of N6-(dimethylallyl)adenosine (i(6)A), leading to the formation of 2-methylthio-N6-(dimethylallyl)adenosine (ms(2)i(6)A) at position 37 in tRNAs that read codons beginning with uridine. This Clostridium novyi (strain NT) protein is tRNA-2-methylthio-N(6)-dimethylallyladenosine synthase.